A 737-amino-acid chain; its full sequence is SANT and BTB domain regulator of class switch recombination (737 aa).

In terms of domain architecture, SANT spans 21–59; that stretch reads DMILYPLIGIPQTINWETVARLVPGLTPKECVKRFDELK. Residues 147-255 form the BTB domain; that stretch reads MVIHVCDEAK…QCIQYCHKNM (109 aa). Positions 555 to 576 are enriched in acidic residues; it reads SEEEEYTTGSEVTEDEVGDEEE. The tract at residues 555–618 is disordered; the sequence is SEEEEYTTGS…TLEKSTSRDV (64 aa). Over residues 580–595 the composition is skewed to basic residues; sequence KQRKKEKPKKFTKPPK. Residues 604-615 show a composition bias toward basic and acidic residues; the sequence is QKKEKTLEKSTS.

It belongs to the KIAA1841 family. Homodimer. Interacts (via the BTB domain) with HDAC1 and NCOR2.

In terms of biological role, negatively regulates class switch recombination or isotype switching in splenic B-cells. This is SANT and BTB domain regulator of class switch recombination from Rattus norvegicus (Rat).